A 123-amino-acid polypeptide reads, in one-letter code: Small ribosomal subunit protein uS13c (123 aa).

The segment at 89 to 123 (RGKRHRNNLPVRGQRTRTNARSRRGSKKTVTGKKK) is disordered. The span at 102-123 (QRTRTNARSRRGSKKTVTGKKK) shows a compositional bias: basic residues.

The protein belongs to the universal ribosomal protein uS13 family. Part of the 30S ribosomal subunit.

The protein localises to the plastid. It is found in the chloroplast. Functionally, located at the top of the head of the 30S subunit, it contacts several helices of the 16S rRNA. This Phaeodactylum tricornutum (strain CCAP 1055/1) protein is Small ribosomal subunit protein uS13c.